The primary structure comprises 248 residues: 3-deoxy-manno-octulosonate cytidylyltransferase (248 aa).

The protein belongs to the KdsB family.

It localises to the cytoplasm. The catalysed reaction is 3-deoxy-alpha-D-manno-oct-2-ulosonate + CTP = CMP-3-deoxy-beta-D-manno-octulosonate + diphosphate. The protein operates within nucleotide-sugar biosynthesis; CMP-3-deoxy-D-manno-octulosonate biosynthesis; CMP-3-deoxy-D-manno-octulosonate from 3-deoxy-D-manno-octulosonate and CTP: step 1/1. It participates in bacterial outer membrane biogenesis; lipopolysaccharide biosynthesis. Functionally, activates KDO (a required 8-carbon sugar) for incorporation into bacterial lipopolysaccharide in Gram-negative bacteria. This chain is 3-deoxy-manno-octulosonate cytidylyltransferase, found in Klebsiella pneumoniae subsp. pneumoniae (strain ATCC 700721 / MGH 78578).